The chain runs to 719 residues: MAEITVTIDTDQQKQAISDSFAKLDPQYLVKNPVLFVVELGTIIGLVMTIAPGLFGATGSRVYYAVITVLLGFTVIFANYAEAYAELEGEAQADSLRALQTEAEGKLLQNDDVDIEDISEDDYEVVASTEIEQDAVVFVDEGDIIPRDGTVVEGSASVDESAITGESEPVIRQSGGDRTSVVGGTEVLSDRIKVEVTSEEGESFLDQMIGLVEDAQRQKTPNEIAMTILLSGLTLVFVVAVATMFFFGEYLASFVGGFAGLDVAELVALLVALMPTTIGALLAAIRVAGMTRVTRRNVIAKSGRAVEAAGDLDALILDKTGTITTGERVAQDFHPLGDADDADVVRASYQSSLYDETTEGRSIVKLAEKMNGKVQTDGGQSASEELDEPGDSVDAPRDVSVTLDAEGLSESNFVPFSAETRMSGIDLSDGTEIRKGAVDAVEEYATTVPGKLRQKSNAISESGGTPLAIAVDGQVVGIIELQDELKPGIADRIAEIQKMGVETIMATGDNQRTARWVADQVGIDEFHAEFDPEEKIELVEDIQDDGKLVGMTGDGTNDAPALAKADVGLAMNAGTNAAKEAGNMVDLDSNPSKIIEVVGIGKQLLMTRGSLTTFSVANDVAKYFVLLPAILAAAIPGLGAMDILNLSTPASAVTATLMYNAFIIPLLIPLALRGVDYKAQSGAQLLRKNLIVYGGGGLIAPFIFIKAIDMLFVALGVFQ.

4 consecutive transmembrane segments (helical) span residues 35 to 55 (LFVVELGTIIGLVMTIAPGLF), 62 to 82 (VYYAVITVLLGFTVIFANYAE), 228 to 248 (ILLSGLTLVFVVAVATMFFFG), and 254 to 274 (FVGGFAGLDVAELVALLVALM). Asp318 serves as the catalytic 4-aspartylphosphate intermediate. Asp355 and Glu359 together coordinate ATP. A disordered region spans residues 372-396 (GKVQTDGGQSASEELDEPGDSVDAP). Residues 373–383 (KVQTDGGQSAS) are compositionally biased toward polar residues. Residues 416–423 (FSAETRMS) and Lys435 each bind ATP. Mg(2+)-binding residues include Asp554 and Asp558. The next 3 helical transmembrane spans lie at 624 to 644 (FVLLPAILAAAIPGLGAMDIL), 652 to 672 (AVTATLMYNAFIIPLLIPLAL), and 698 to 718 (LIAPFIFIKAIDMLFVALGVF).

This sequence belongs to the cation transport ATPase (P-type) (TC 3.A.3) family. Type IA subfamily. As to quaternary structure, the system is composed of three essential subunits: KdpA, KdpB and KdpC. The complex also contains KdpF, a small non-essential subunit.

It is found in the cell membrane. It carries out the reaction K(+)(out) + ATP + H2O = K(+)(in) + ADP + phosphate + H(+). Part of the high-affinity ATP-driven potassium transport (or Kdp) system, which catalyzes the hydrolysis of ATP coupled with the electrogenic transport of potassium into the cytoplasm. This subunit is responsible for energy coupling to the transport system and for the release of the potassium ions to the cytoplasm. The Kdp system is essential for growth under K(+) limitation, and for survival under desiccation and salt crystal inclusion. The protein is Potassium-transporting ATPase ATP-binding subunit of Halobacterium salinarum (strain ATCC 29341 / DSM 671 / R1).